The chain runs to 1663 residues: Complement C3 (1663 aa).

An N-terminal signal peptide occupies residues 1 to 22 (MGPTSGPSLLLLLLTHLPLALG). Phosphoserine; by FAM20C occurs at positions 38 and 70. Residue asparagine 85 is glycosylated (N-linked (GlcNAc...) asparagine). Residues serine 297 and serine 303 each carry the phosphoserine; by FAM20C modification. 13 disulfide bridges follow: cysteine 559–cysteine 816, cysteine 627–cysteine 662, cysteine 693–cysteine 720, cysteine 694–cysteine 727, cysteine 707–cysteine 728, cysteine 873–cysteine 1513, cysteine 1101–cysteine 1158, cysteine 1358–cysteine 1489, cysteine 1389–cysteine 1458, cysteine 1506–cysteine 1511, cysteine 1518–cysteine 1590, cysteine 1537–cysteine 1661, and cysteine 1637–cysteine 1646. At serine 672 the chain carries Phosphoserine; by FAM20C. The Anaphylatoxin-like domain maps to 693–728 (CCEDGMRENPMRFSCQRRTRFISLGEACKKVFLDCC). Asparagine 939 carries N-linked (GlcNAc...) asparagine glycosylation. The segment at 954–973 (REGVQKEDIPPADLSDQVPD) is disordered. Serine 968 is modified (phosphoserine; by FAM20C). The isoglutamyl cysteine thioester (Cys-Gln) cross-link spans 1010 to 1013 (CGEQ). Position 1321 is a phosphoserine; by FAM20C (serine 1321). An NTR domain is found at 1518–1661 (CFIQKSDDKV…FTESMVVFGC (144 aa)). Position 1573 is a phosphoserine; by FAM20C (serine 1573). Asparagine 1617 carries N-linked (GlcNAc...) asparagine glycosylation. The tract at residues 1634–1659 (EDECQDEENQKQCQDLGAFTESMVVF) is interaction with CFP/properdin.

As to quaternary structure, in absence of complement activation, the C3 precursor is first processed by the removal of 4 Arg residues, forming two chains, beta and alpha, linked by a disulfide bond. In terms of assembly, complement C3b is composed of complement C3b and complement C3 beta chains that are associated via disulfide bonds. Non-enzymatic component of the C5 convertase, also named C4bC2bC3b, composed of the serine protease complement C2b (C2), complement C3b, as well as complement C4b (C4). Non-enzymatic component of the C5 convertase of the alternative complement pathways composed of the serine protease complement CFB and complement C3b. Interacts with CFP; interaction takes place together with CFB in the alternative complement system and allows the complex to become active. Interacts with CR1 (via Sushi 8 and Sushi 9 domains). Interacts with CFH. Interacts with CFH. Interacts with CR2. As to quaternary structure, during pregnancy, C3dg exists as a complex (probably a 2:2:2 heterohexamer) with AGT and the proform of PRG2. Interacts with CR2 (via the N-terminal Sushi domains 1 and 2). In terms of assembly, (Microbial infection) C3b interacts with herpes simplex virus 1 (HHV-1) and herpes simplex virus 2 (HHV-2) envelope glycoprotein C; this interaction inhibits the activation of the complement system. (Microbial infection) Interacts with Staphylococcus aureus immunoglobulin-binding protein Sbi; this interaction prevents the association between C3dg and CR2. As to quaternary structure, (Microbial infection) Interacts with Staphylococcus aureus protein Fib. C3 precursor is first processed by the removal of 4 Arg residues, forming two chains, beta and alpha, linked by a disulfide bond. During activation of the complement systems, the alpha chain is cleaved into C3a and C3b by the C3 convertase: C3b stays linked to the beta chain, while C3a is released in the plasma. The alpha chain is cleaved by the serine protease complement C2b component of the C3 convertase to generate C3a and C3b following activation by the classical, lectin and GZMK complement systems. The alpha chain is cleaved by CFB component of the C3 convertase to generate C3a and C3b following activation by the alternative complement system. In terms of processing, C3a is further processed by carboxypeptidases to release the C-terminal arginine residue generating the acylation stimulating protein (ASP). Levels of ASP are increased in adipocytes in the postprandial period and by insulin and dietary chylomicrons. Post-translationally, complement C3b is rapidly split in two positions by factor I (CFI) and a cofactor (CFH) to form iC3b (inactivated C3b) and C3f which is released. CFI and CFH catalyze proteolytic degradation of already-deposited complement C3b. Then iC3b is slowly cleaved (possibly by CFI) to form C3c (beta chain + alpha' chain fragment 1 + alpha' chain fragment 2), C3dg and C3f. Other proteases produce other fragments such as C3d or C3g. Upon activation, the internal thioester bond reacts with carbohydrate antigens on the target surface to form amide or ester bonds, leading to covalent association with the surface of pathogens. In terms of processing, complement C3b interacts with complement C4b via a thioester linkage. Post-translationally, phosphorylated by FAM20C in the extracellular medium. (Microbial infection) C3 is cleaved by Staphylococcus aureus aureolysin; this cleavage renders C3a and C3b inactive. C3b is rapidly degraded by host factors CFH and CFI preventing its deposition on the bacterial surface while C3a is further inactivated by aureolysin. In terms of processing, (Microbial infection) Complement C3 beta chain is cleaved and inactivated by S.pyogenes SpeB. Post-translationally, (Microbial infection) Cleaved by N.meningitidis NalP between Leu-744 and Gly-745, generating a slightly shorter C3 alpha form and a slightly longer C3 beta form. The C3b-like fragment is degraded in the presence of the complement regulators CFH and CFI, preventing its deposition on the bacterial surface. As to expression, plasma. In terms of tissue distribution, produced in adipocytes and released into the plasma during both the fasting and postprandial periods.

It is found in the secreted. It localises to the cell surface. Complement activation is inhibited by VSIG4. Precursor of non-enzymatic components of the classical, alternative, lectin and GZMK complement pathways, which consist in a cascade of proteins that leads to phagocytosis and breakdown of pathogens and signaling that strengthens the adaptive immune system. In terms of biological role, non-enzymatic component of C5 convertase. Generated following cleavage by C3 convertase, it covalently attaches to the surface of pathogens, where it acts as an opsonin that marks the surface of antigens for removal. Complement C3b binds covalently via its reactive thioester, to cell surface carbohydrates or immune aggregates. Together with complement C4b, it then recruits the serine protease complement C2b to form the C5 convertase, which cleaves and activate C5, the next component of the complement pathways. In the alternative complement pathway, recruits the serine protease CFB to form the C5 convertase that cleaves and activates C5. Functionally, mediator of local inflammatory process released following cleavage by C3 convertase. Acts by binding to its receptor, C3AR1, activating G protein-coupled receptor signaling, promoting the phosphorylation, ARRB2-mediated internalization and endocytosis of C3AR1. C3a anaphylatoxin stimulates the activation of immune cells such as mast cells and basophilic leukocytes to release inflammation agents, such as cytokines, chemokines and histamine, which promote inflammation development. Also acts as potent chemoattractant for the migration of macrophages and neutrophils to the inflamed tissues, resulting in neutralization of the inflammatory triggers by multiple ways, such as phagocytosis and generation of reactive oxidants. Its function is as follows. Adipogenic hormone that stimulates triglyceride synthesis and glucose transport in adipocytes, regulating fat storage and playing a role in postprandial triglyceride clearance. Appears to stimulate triglyceride synthesis via activation of the PLC, MAPK and AKT signaling pathways. Acts by binding to its receptor, C5AR2, activating G protein-coupled receptor signaling, promoting the phosphorylation, ARRB2-mediated internalization and endocytosis of C5AR2. Acts as a chemoattractant for neutrophils in chronic inflammation. This Homo sapiens (Human) protein is Complement C3.